We begin with the raw amino-acid sequence, 635 residues long: Threonine--tRNA ligase (635 aa).

The TGS domain occupies 1-61 (MINISFPDGS…DNDCKLRILT (61 aa)). The interval 242 to 533 (DHRKLGRELD…LIEEYAGRFP (292 aa)) is catalytic. C333, H384, and H510 together coordinate Zn(2+).

The protein belongs to the class-II aminoacyl-tRNA synthetase family. In terms of assembly, homodimer. Zn(2+) is required as a cofactor.

It localises to the cytoplasm. The enzyme catalyses tRNA(Thr) + L-threonine + ATP = L-threonyl-tRNA(Thr) + AMP + diphosphate + H(+). Functionally, catalyzes the attachment of threonine to tRNA(Thr) in a two-step reaction: L-threonine is first activated by ATP to form Thr-AMP and then transferred to the acceptor end of tRNA(Thr). Also edits incorrectly charged L-seryl-tRNA(Thr). This Rickettsia africae (strain ESF-5) protein is Threonine--tRNA ligase.